The sequence spans 322 residues: Thymidylate synthase (322 aa).

DUMP-binding positions include R25 and R184 to R185. The Nucleophile role is filled by C204. DUMP is bound by residues R224–D227, N235, and H265–Y267. (6R)-5,10-methylene-5,6,7,8-tetrahydrofolate is bound at residue D227. Position 321 (A321) interacts with (6R)-5,10-methylene-5,6,7,8-tetrahydrofolate.

This sequence belongs to the thymidylate synthase family. Bacterial-type ThyA subfamily. Homodimer.

The protein resides in the cytoplasm. It catalyses the reaction dUMP + (6R)-5,10-methylene-5,6,7,8-tetrahydrofolate = 7,8-dihydrofolate + dTMP. It functions in the pathway pyrimidine metabolism; dTTP biosynthesis. In terms of biological role, catalyzes the reductive methylation of 2'-deoxyuridine-5'-monophosphate (dUMP) to 2'-deoxythymidine-5'-monophosphate (dTMP) while utilizing 5,10-methylenetetrahydrofolate (mTHF) as the methyl donor and reductant in the reaction, yielding dihydrofolate (DHF) as a by-product. This enzymatic reaction provides an intracellular de novo source of dTMP, an essential precursor for DNA biosynthesis. The polypeptide is Thymidylate synthase (Leuconostoc mesenteroides subsp. mesenteroides (strain ATCC 8293 / DSM 20343 / BCRC 11652 / CCM 1803 / JCM 6124 / NCDO 523 / NBRC 100496 / NCIMB 8023 / NCTC 12954 / NRRL B-1118 / 37Y)).